Reading from the N-terminus, the 450-residue chain is Divalent metal cation transporter MntH (450 aa).

11 helical membrane passes run 34 to 54 (LSFL…GNWI), 61 to 81 (AQYG…AMLL), 108 to 128 (IAII…IAEV), 141 to 161 (IPLI…LFIM), 170 to 190 (AIVG…VYIS), 212 to 232 (GILY…NLYL), 263 to 283 (IQLS…ASLF), 305 to 325 (PVLG…ALLA), 361 to 381 (SLAV…AAKI), 383 to 403 (QLLV…LIPL), and 422 to 442 (VNII…YLIV).

Belongs to the NRAMP family.

It is found in the cell membrane. H(+)-stimulated, divalent metal cation uptake system. The polypeptide is Divalent metal cation transporter MntH (Staphylococcus aureus (strain JH1)).